Consider the following 1259-residue polypeptide: MDGPTRGHGLRKKRRSRSQRDRERRSRGGLGAGAAGGGGAGRTRALSLASSSGSDKEDNGKPPSSAPSRPRPPRRKRRESTSAEEDIIDGFAMTSFVTFEALEKDVALKPQERVEKRQTPLTKKKREALTNGLSFHSKKSRLSHPHHYSSDRENDRNLCQHLGKRKKMPKALRQLKPGQNSCRDSDSESASGESKGFHRSSSRERLSDSSAPSSLGTGYFCDSDSDQEEKASDASSEKLFNTVIVNKDPELGVGTLPEHDSQDAGPIVPKISGLERSQEKSQDCCKEPIFEPVVLKDPCPQVAQPIPQPQTEPQLRAPSPDPDLVQRTEAPPQPPPLSTQPPQGPPEAQLQPAPQPQVQRPPRPQSPTQLLHQNLPPVQAHPSAQSLSQPLSAYNSSSLSLNSLSSSRSSTPAKTQPAPPHISHHPSASPFPLSLPNHSPLHSFTPTLQPPAHSHHPNMFAPPTALPPPPPLTSGSLQVAGHPAGSTYSEQDILRQELNTRFLASQSADRGASLGPPPYLRTEFHQHQHQHQHTHQHTHQHTFTPFPHAIPPTAIMPTPAPPMFDKYPTKVDPFYRHSLFHSYPPAVSGIPPMIPPTGPFGSLQGAFQPKTSNPIDVAARPGTVPHTLLQKDPRLTDPFRPMLRKPGKWCAMHVHIAWQIYHHQQKVKKQMQSDPHKLDFGLKPEFLSRPPGPSLFGAIHHPHDLARPSTLFSAAGAAHPTGTPFGPPPHHSNFLNPAAHLEPFNRPSTFTGLAAVGGNAFGGLGNPSVTPNSMFGHKDGPSVQNFSNPHEPWNRLHRTPPSFPTPPPWLKPGELERSASAAAHDRDRDVDKRDSSVSKDDKERESVEKRHSSHPSPAPVLPVNALGHTRSSTEQIRAHLNTEAREKDKPKERERDHSESRKDLAADEHKAKEGHLPEKDGHGHEGRAAGEEAKQLARVPSPYVRTPVVESARPNSTSSREAEPRKGEPAYENPKKSSEVKVKEERKEDHDLPPEAPQTHRASEPPPPNSSSSVHPGPLASMPMTVGVTGIHPMNSISSLDRTRMMTPFMGISPLPGGERFPYPSFHWDPIRDPLRDPYRELDIHRRDPLGRDFLLRNDPLHRLSTPRLYEADRSFRDREPHDYSHHHHHHHHPLSVDPRREHERGGHLDERERLHMLREDYEHTRLHSVHPASLDGHLPHPSLITPGLPSMHYPRISPTAGNQNGLLNKTPPTAALSAPPPLISTLGGRPVSPRRTTPLSAEIRERPPSHTLKDIEAR.

5 disordered regions span residues 1 to 87, 108 to 285, 299 to 470, 771 to 1027, and 1119 to 1146; these read MDGP…EEDI, LKPQ…QDCC, CPQV…PPPP, PNSM…MTVG, and REPHDYSHHHHHHHHPLSVDPRREHERG. Residues 8-17 are compositionally biased toward basic residues; sequence HGLRKKRRSR. The span at 28-41 shows a compositional bias: gly residues; sequence GGLGAGAAGGGGAG. Residues 108–118 show a composition bias toward basic and acidic residues; the sequence is LKPQERVEKRQ. Basic residues predominate over residues 136-147; that stretch reads HSKKSRLSHPHH. Residues 148 to 158 show a composition bias toward basic and acidic residues; sequence YSSDRENDRNL. A compositionally biased stretch (polar residues) spans 177–192; it reads PGQNSCRDSDSESASG. The span at 276–285 shows a compositional bias: basic and acidic residues; the sequence is RSQEKSQDCC. The segment at 289–472 is important for regulation of lamellipodia formation; the sequence is IFEPVVLKDP…PTALPPPPPL (184 aa). 2 stretches are compositionally biased toward pro residues: residues 331–345 and 353–365; these read PPQPPPLSTQPPQGP and APQPQVQRPPRPQ. Over residues 386–410 the composition is skewed to low complexity; it reads SLSQPLSAYNSSSLSLNSLSSSRSS. The span at 436-447 shows a compositional bias: polar residues; it reads PNHSPLHSFTPT. The span at 801 to 810 shows a compositional bias: pro residues; it reads PSFPTPPPWL. 3 stretches are compositionally biased toward basic and acidic residues: residues 813–850, 876–935, and 960–993; these read GELERSASAAAHDRDRDVDKRDSSVSKDDKERESVEKR, IRAH…EAKQ, and REAEPRKGEPAYENPKKSSEVKVKEERKEDHDLP. The span at 1125–1134 shows a compositional bias: basic residues; sequence SHHHHHHHHP. Phosphoserine occurs at positions 1198 and 1233. Residues 1217 to 1259 are disordered; sequence LSAPPPLISTLGGRPVSPRRTTPLSAEIRERPPSHTLKDIEAR. Residues 1243 to 1259 are compositionally biased toward basic and acidic residues; it reads EIRERPPSHTLKDIEAR.

This sequence belongs to the AUTS2 family. In terms of assembly, component of a PRC1-like complex that contains PCGF5, RNF2, CSNK2B, RYBP and AUTS2. Within this complex, interacts directly with PCGF5 and CSNK2B. Interacts with the histone acetyltransferase EP300/p300. Interacts (via Pro-rich region) with PREX1, DOCK1 and ELMO2. As to expression, strongly expressed in brain, skeletal muscle and kidney. Also expressed in placenta, lung and leukocytes.

The protein localises to the nucleus. Its subcellular location is the cytoplasm. It is found in the cytoskeleton. It localises to the cell projection. The protein resides in the growth cone. Its function is as follows. Component of a Polycomb group (PcG) multiprotein PRC1-like complex, a complex class required to maintain the transcriptionally repressive state of many genes, including Hox genes, throughout development. PcG PRC1 complex acts via chromatin remodeling and modification of histones; it mediates monoubiquitination of histone H2A 'Lys-119', rendering chromatin heritably changed in its expressibility. The PRC1-like complex that contains PCGF5, RNF2, CSNK2B, RYBP and AUTS2 has decreased histone H2A ubiquitination activity, due to the phosphorylation of RNF2 by CSNK2B. As a consequence, the complex mediates transcriptional activation. In the cytoplasm, plays a role in axon and dendrite elongation and in neuronal migration during embryonic brain development. Promotes reorganization of the actin cytoskeleton, lamellipodia formation and neurite elongation via its interaction with RAC guanine nucleotide exchange factors, which then leads to the activation of RAC1. The sequence is that of Autism susceptibility gene 2 protein (AUTS2) from Homo sapiens (Human).